The chain runs to 127 residues: MIKQIKRKKVKKNVVVGVVHIQASFNNTIVTITDLGGNTLSTGSAGAVGFKGARKGTPFAAQLASEKAAEKATEYGLKKVEVLVKGQGSGRETAVRAIQNSDIEITAITDITSIPFNGCRPPKRRRV.

It belongs to the universal ribosomal protein uS11 family. In terms of assembly, part of the 30S ribosomal subunit.

The protein localises to the plastid. It localises to the chloroplast. This is Small ribosomal subunit protein uS11c from Heterosigma akashiwo (strain NIES-293 / 8280G21-1).